A 407-amino-acid chain; its full sequence is Rubber oxygenase (407 aa).

Positions 1–30 (MDGFSRRRMLMTGGALGAVGALGAATRALA) form a signal peptide, tat-type signal. His-198 is a binding site for heme.

This sequence belongs to the rubber oxygenase Lcp family. Heme b serves as cofactor. Exported by the Tat system. The position of the signal peptide cleavage has not been experimentally proven.

The protein localises to the secreted. Its pathway is biopolymer metabolism. Its function is as follows. Involved in the initial step of rubber degradation. Catalyzes the oxidative C-C cleavage of poly(cis-1,4-isoprene) in synthetic as well as in natural rubber by the addition of oxygen (O2) to the double bonds, leading to a mixture of oligonucleotide-isoprenoids with terminal keto and aldehyde groups (endo-type cleavage). The cleavage products are of different lengths, ranging from C20 (four isoprene units) to higher oligo-isoprenoids. Is not able to cleave low-molecular-weight substrate analogs with isoprenoid structure such as squalene (1,4-trans-isoprenoid), carotenoids, or alpha-tocopherol. This chain is Rubber oxygenase, found in Streptomyces sp. (strain K30).